Here is a 353-residue protein sequence, read N- to C-terminus: Protein U67 (353 aa).

This sequence belongs to the herpesviridae UL95 family.

The polypeptide is Protein U67 (U67) (Human herpesvirus 6A (strain Uganda-1102) (HHV-6 variant A)).